The primary structure comprises 347 residues: Selenide, water dikinase (347 aa).

Residue Cys17 is part of the active site. ATP is bound by residues Lys20 and 48 to 50 (TRD). Mg(2+) is bound at residue Asp51. ATP-binding positions include Asp68, Asp91, and 139 to 141 (GHS). Asp91 is a binding site for Mg(2+). Asp227 contributes to the Mg(2+) binding site.

It belongs to the selenophosphate synthase 1 family. Class I subfamily. Homodimer. Mg(2+) is required as a cofactor.

The enzyme catalyses hydrogenselenide + ATP + H2O = selenophosphate + AMP + phosphate + 2 H(+). Functionally, synthesizes selenophosphate from selenide and ATP. The protein is Selenide, water dikinase of Escherichia coli O139:H28 (strain E24377A / ETEC).